A 345-amino-acid chain; its full sequence is N-acetyl-gamma-glutamyl-phosphate reductase (345 aa).

The active site involves cysteine 149.

It belongs to the NAGSA dehydrogenase family. Type 1 subfamily.

The protein localises to the cytoplasm. It carries out the reaction N-acetyl-L-glutamate 5-semialdehyde + phosphate + NADP(+) = N-acetyl-L-glutamyl 5-phosphate + NADPH + H(+). Its pathway is amino-acid biosynthesis; L-arginine biosynthesis; N(2)-acetyl-L-ornithine from L-glutamate: step 3/4. Functionally, catalyzes the NADPH-dependent reduction of N-acetyl-5-glutamyl phosphate to yield N-acetyl-L-glutamate 5-semialdehyde. The protein is N-acetyl-gamma-glutamyl-phosphate reductase of Desulforapulum autotrophicum (strain ATCC 43914 / DSM 3382 / VKM B-1955 / HRM2) (Desulfobacterium autotrophicum).